We begin with the raw amino-acid sequence, 170 residues long: Adenine phosphoribosyltransferase (170 aa).

This sequence belongs to the purine/pyrimidine phosphoribosyltransferase family. Homodimer.

Its subcellular location is the cytoplasm. It carries out the reaction AMP + diphosphate = 5-phospho-alpha-D-ribose 1-diphosphate + adenine. The protein operates within purine metabolism; AMP biosynthesis via salvage pathway; AMP from adenine: step 1/1. Its function is as follows. Catalyzes a salvage reaction resulting in the formation of AMP, that is energically less costly than de novo synthesis. In Thermotoga petrophila (strain ATCC BAA-488 / DSM 13995 / JCM 10881 / RKU-1), this protein is Adenine phosphoribosyltransferase.